The primary structure comprises 577 residues: Pentatricopeptide repeat-containing protein At1g06143 (577 aa).

PPR repeat units follow at residues 59 to 89 (DCRL…MQEP), 90 to 124 (NVFV…SVSP), 125 to 155 (SSYT…KFGF), 158 to 192 (HVKI…DDIA), 193 to 219 (WTTM…MSEK), 220 to 250 (NEAT…MPVK), 251 to 285 (DIIS…GIIP), 286 to 320 (DEVT…GFVL), 321 to 351 (DVYI…LPKK), 352 to 386 (NLFC…SVKP), 387 to 417 (NAVT…MIDD), and 423 to 453 (NVEH…MEFE). Residues 458-534 (IWGALLDGCR…CPGTSSIRID (77 aa)) form a type E motif region. The segment at 535 to 565 (KRDHLFAAADKSHSASDEVCLLLDEIYDQMG) is type E(+) motif.

It belongs to the PPR family. PCMP-E subfamily.

In Arabidopsis thaliana (Mouse-ear cress), this protein is Pentatricopeptide repeat-containing protein At1g06143 (EMB1444).